The sequence spans 269 residues: Monofunctional glycosyltransferase (269 aa).

A helical membrane pass occupies residues 46–66 (ILLTILIIIALFIGIMYFLST).

The protein belongs to the glycosyltransferase 51 family.

It is found in the cell membrane. The enzyme catalyses [GlcNAc-(1-&gt;4)-Mur2Ac(oyl-L-Ala-gamma-D-Glu-L-Lys-D-Ala-D-Ala)](n)-di-trans,octa-cis-undecaprenyl diphosphate + beta-D-GlcNAc-(1-&gt;4)-Mur2Ac(oyl-L-Ala-gamma-D-Glu-L-Lys-D-Ala-D-Ala)-di-trans,octa-cis-undecaprenyl diphosphate = [GlcNAc-(1-&gt;4)-Mur2Ac(oyl-L-Ala-gamma-D-Glu-L-Lys-D-Ala-D-Ala)](n+1)-di-trans,octa-cis-undecaprenyl diphosphate + di-trans,octa-cis-undecaprenyl diphosphate + H(+). It functions in the pathway cell wall biogenesis; peptidoglycan biosynthesis. Functionally, peptidoglycan polymerase that catalyzes glycan chain elongation using lipid-linked disaccharide-pentapeptide as the substrate. This chain is Monofunctional glycosyltransferase, found in Staphylococcus aureus (strain JH1).